The primary structure comprises 297 residues: Esterase LipU (297 aa).

Residues Ser-140, Glu-239, and His-269 contribute to the active site.

The protein belongs to the 'GDXG' lipolytic enzyme family.

The protein localises to the secreted. The catalysed reaction is a fatty acid ester + H2O = an aliphatic alcohol + a fatty acid + H(+). It carries out the reaction a butanoate ester + H2O = an aliphatic alcohol + butanoate + H(+). The enzyme catalyses an acetyl ester + H2O = an aliphatic alcohol + acetate + H(+). It catalyses the reaction decanoate ester + H2O = decanoate + an aliphatic alcohol + H(+). The catalysed reaction is an octanoate ester + H2O = an aliphatic alcohol + octanoate + H(+). It carries out the reaction a dodecanoate ester + H2O = an aliphatic alcohol + dodecanoate + H(+). The enzyme catalyses hexadecanoate ester + H2O = an aliphatic alcohol + hexadecanoate + H(+). With respect to regulation, inhibited by the ionic detergent SDS and by the serine protease inhibitor PMSF. Inhibited by the FDA approved drugs Diosmin, Acarbose and Ouabain. These drugs remain bound in the active site pocket and could be probable drug candidates to combat TB disease. In terms of biological role, esterase that shows preference for short chain fatty acids. Contributes to the growth of M.tuberculosis during the nutritive stress. Elicits strong humoral response in both extrapulmonary and relapsed cases of tuberculosis patients. This is Esterase LipU from Mycobacterium tuberculosis (strain ATCC 25618 / H37Rv).